The chain runs to 866 residues: Probable outer membrane usher protein ElfC (866 aa).

An N-terminal signal peptide occupies residues 1-35; the sequence is MYRTHRQHSLLSSGGVPSFIGGLVVFVSAAFNAQA.

Belongs to the fimbrial export usher family.

The protein resides in the cell outer membrane. Part of the elfADCG-ycbUVF fimbrial operon, which promotes adhesion of bacteria to different abiotic surfaces. Could be involved in the export and assembly of the ElfA fimbrial subunits across the outer membrane. The chain is Probable outer membrane usher protein ElfC (elfC) from Escherichia coli (strain K12).